Reading from the N-terminus, the 368-residue chain is 3-dehydroquinate synthase (368 aa).

Residues 99–103, 123–124, K136, and K145 each bind NAD(+); these read GVVGD and TT. Positions 178, 242, and 259 each coordinate Zn(2+).

Belongs to the sugar phosphate cyclases superfamily. Dehydroquinate synthase family. NAD(+) serves as cofactor. The cofactor is Co(2+). Requires Zn(2+) as cofactor.

It localises to the cytoplasm. It catalyses the reaction 7-phospho-2-dehydro-3-deoxy-D-arabino-heptonate = 3-dehydroquinate + phosphate. It functions in the pathway metabolic intermediate biosynthesis; chorismate biosynthesis; chorismate from D-erythrose 4-phosphate and phosphoenolpyruvate: step 2/7. In terms of biological role, catalyzes the conversion of 3-deoxy-D-arabino-heptulosonate 7-phosphate (DAHP) to dehydroquinate (DHQ). This Chlorobaculum tepidum (strain ATCC 49652 / DSM 12025 / NBRC 103806 / TLS) (Chlorobium tepidum) protein is 3-dehydroquinate synthase.